The chain runs to 259 residues: Early E4 30 kDa protein (259 aa).

Belongs to the adenoviridae E4 30 to 34 kDa protein family. As to quaternary structure, interacts with E1B-55k.

Its subcellular location is the host nucleus. The protein resides in the host cytoplasm. Plays a major role to prevent cellular inhibition of viral genome replication by nuclear bodies. Assembles an SCF-like E3 ubiquitin ligase complex based on the cellular proteins ELOB, ELOC, CUL5 and RBX1, in cooperation with viral E1B-55K. This viral RING-type ligase ubiquitinates cellular substrates prior to proteasomal degradation: p53/TP53, LIG4, MRE11-RAD50-NBS1 (MRN) complex, ITGA3, DAXX and BLM. The chain is Early E4 30 kDa protein from Canine adenovirus serotype 2 (strain Toronto A 26-61) (CAdV-2).